The following is a 175-amino-acid chain: MLPVYPFLAPVFDTFESTRALFLEATLSLQEPWWFRLLSFFRSPRYTGLADVVRAIACEREADFTAITPSSLIEDIAEGRFVMLVGLMEYLRFDTAGQGIVSFAFLSYLIDRVTKQSPLAHFTVVEVVSLVVWRTVKLSRRRERRWVSQLSTLAEEDEDEEGTTLTTEAEQESSA.

The interval leucine 153–alanine 175 is disordered.

The protein belongs to the adenoviridae E1B 19 kDa protein family.

The protein is E1B protein, small T-antigen of Mus musculus (Mouse).